The sequence spans 277 residues: Large ribosomal subunit protein uL2 (277 aa).

Residues 222-277 (GVAMNPVDHPHGGGEGRTSGGRHPVSPWGKPTKGKRTRSNKATDKFIMRTRHQRKK) are disordered.

Belongs to the universal ribosomal protein uL2 family. In terms of assembly, part of the 50S ribosomal subunit. Forms a bridge to the 30S subunit in the 70S ribosome.

Functionally, one of the primary rRNA binding proteins. Required for association of the 30S and 50S subunits to form the 70S ribosome, for tRNA binding and peptide bond formation. It has been suggested to have peptidyltransferase activity; this is somewhat controversial. Makes several contacts with the 16S rRNA in the 70S ribosome. This chain is Large ribosomal subunit protein uL2, found in Bartonella henselae (strain ATCC 49882 / DSM 28221 / CCUG 30454 / Houston 1) (Rochalimaea henselae).